Here is a 224-residue protein sequence, read N- to C-terminus: Envelope glycoprotein L (224 aa).

The N-terminal stretch at 1–16 (MGFVCLFGLVVMGAWG) is a signal peptide. Residues 20–161 (GSQATEYVLR…FDYSRTRRCV (142 aa)) are interaction with gH. The 179-residue stretch at 23–201 (ATEYVLRSVI…LATQPPVLAL (179 aa)) folds into the gL alphaherpesvirus-type domain. Cystine bridges form between C44/C76 and C149/C160. A disordered region spans residues 168 to 224 (PANTTSTWEPPVSSDDEASSQSKPLATQPPVLALSNAPPRRVSPTRGRRRHTRLRRN). The span at 213–224 (RGRRRHTRLRRN) shows a compositional bias: basic residues.

It belongs to the herpesviridae glycoprotein L (gL) family. Alphaherpesvirinae gL subfamily. As to quaternary structure, interacts with glycoprotein H (gH); this interaction is necessary for the correct processing and cell surface expression of gH. The heterodimer gH/gL seems to interact with gB trimers during fusion.

It localises to the virion membrane. The protein resides in the host cell membrane. The protein localises to the host Golgi apparatus. Its subcellular location is the host trans-Golgi network. Functionally, the heterodimer glycoprotein H-glycoprotein L is required for the fusion of viral and plasma membranes leading to virus entry into the host cell. Acts as a functional inhibitor of gH and maintains gH in an inhibited form. Upon binding to host integrins, gL dissociates from gH leading to activation of the viral fusion glycoproteins gB and gH. This Homo sapiens (Human) protein is Envelope glycoprotein L.